The following is a 29-amino-acid chain: APALVVTATTNCCGYTGPACHPCLCTQTC.

At Ala-1 the chain carries N-acetylalanine; partial. Pro-2 carries the post-translational modification 4-hydroxyproline. 2 O-linked (HexNAc...) threonine glycosylation sites follow: Thr-7 and Thr-9. Pro-18 and Pro-22 each carry 4-hydroxyproline. Cys-29 carries the post-translational modification Cysteine amide.

It belongs to the conotoxin A superfamily. O-linked glycans consist of Hex4-HexNAc2 hexasaccharides. In terms of processing, N-terminus is found to be free and N-acetylated, depending on the fraction studied. Post-translationally, contains 3 disulfide bonds. In terms of tissue distribution, expressed by the venom duct. Low expression in the distal venom duct sections.

It is found in the secreted. In terms of biological role, probable neurotoxin with ion channel inhibitor activity. The sequence is that of Conotoxin SIVC from Conus striatus (Striated cone).